The following is a 159-amino-acid chain: uncharacterized protein (159 aa).

Disordered stretches follow at residues 1–29 (MHQT…TSES) and 114–159 (TRGG…NENT). The span at 15–29 (SFSNESPTSRETSES) shows a compositional bias: polar residues.

This is an uncharacterized protein from Homo sapiens (Human).